Reading from the N-terminus, the 218-residue chain is MSENEIKGILGTKLGMTQIFDEENRVIPVTVVEAGPCVVSQIRTVETDGYNAIQIAYGEIDPRKVNQPLTGHFKKAGVTPRRHVTEIRMDDVSGYEVGQDVTVEIFNDIKFVDVTGTTKGKGYAGAMKRHGFAGQGAGHGNQAAHRRVGGIGAAATPGRIFKGKRMAGRMGNDRVTTQNLKVQKIDADANIILIKGAIPGNRGGIVTVKTAVKGGAHA.

Belongs to the universal ribosomal protein uL3 family. Part of the 50S ribosomal subunit. Forms a cluster with proteins L14 and L19.

Functionally, one of the primary rRNA binding proteins, it binds directly near the 3'-end of the 23S rRNA, where it nucleates assembly of the 50S subunit. This chain is Large ribosomal subunit protein uL3, found in Corynebacterium glutamicum (strain R).